The following is a 618-amino-acid chain: Probable N-acetylgalactosaminyltransferase 6 (618 aa).

The Cytoplasmic portion of the chain corresponds to 1–16; sequence MIASLIRSRRRSRRCV. The helical; Signal-anchor for type II membrane protein transmembrane segment at 17–39 threads the bilayer; sequence VYSVFLFGFLALWGSFALALVFL. Topologically, residues 40-618 are lumenal; that stretch reads SDMYIGEDQI…TEMSWLPEHP (579 aa). N-linked (GlcNAc...) asparagine glycans are attached at residues asparagine 81 and asparagine 149. 2 disulfide bridges follow: cysteine 147–cysteine 381 and cysteine 372–cysteine 452. The catalytic subdomain A stretch occupies residues 156 to 267; it reads LPTTSVIIVY…KGWLEPLLTR (112 aa). 2 residues coordinate substrate: aspartate 197 and arginine 228. Aspartate 251 contributes to the Mn(2+) binding site. Serine 252 contributes to the substrate binding site. Histidine 253 serves as a coordination point for Mn(2+). The tract at residues 327 to 389 is catalytic subdomain B; that stretch reads PIESPTMAGG…PCSHVGHVFR (63 aa). Tryptophan 358 provides a ligand contact to substrate. Histidine 386 contributes to the Mn(2+) binding site. Arginine 389 provides a ligand contact to substrate. One can recognise a Ricin B-type lectin domain in the interval 474-609; the sequence is RFGRMTSSSN…SNDRQNWTIT (136 aa). An N-linked (GlcNAc...) asparagine glycan is attached at asparagine 483. 3 disulfides stabilise this stretch: cysteine 487–cysteine 505, cysteine 530–cysteine 550, and cysteine 575–cysteine 597. The N-linked (GlcNAc...) asparagine glycan is linked to asparagine 605.

This sequence belongs to the glycosyltransferase 2 family. GalNAc-T subfamily. Requires Mn(2+) as cofactor.

It is found in the golgi apparatus membrane. The protein operates within protein modification; protein glycosylation. Functionally, probable glycopeptide transferase involved in O-linked oligosaccharide biosynthesis. Glycopeptide transferases catalyze the transfer of an N-acetyl-D-galactosamine residue to an already glycosylated peptide. In contrast to other members of the family, it does not act as a peptide transferase that transfers GalNAc onto serine or threonine residue on peptides that have been tested. Some peptide transferase activity is however not excluded, considering that its appropriate peptide substrate may remain unidentified. In Caenorhabditis elegans, this protein is Probable N-acetylgalactosaminyltransferase 6 (gly-6).